We begin with the raw amino-acid sequence, 726 residues long: Fatty acid oxidation complex subunit alpha (726 aa).

The segment at 1 to 189 (MIYQGENLSV…KIGMVDGIVS (189 aa)) is enoyl-CoA hydratase/isomerase. Asp-296 provides a ligand contact to substrate. Positions 311–726 (EPVKNAAVLG…PKSSVSSPSV (416 aa)) are 3-hydroxyacyl-CoA dehydrogenase. Residues Met-324, Asp-343, 400 to 402 (VVE), Lys-407, and Ser-429 each bind NAD(+). His-450 (for 3-hydroxyacyl-CoA dehydrogenase activity) is an active-site residue. Asn-453 contacts NAD(+). Substrate contacts are provided by Asn-500 and Tyr-660.

In the N-terminal section; belongs to the enoyl-CoA hydratase/isomerase family. This sequence in the C-terminal section; belongs to the 3-hydroxyacyl-CoA dehydrogenase family. In terms of assembly, heterotetramer of two alpha chains (FadB) and two beta chains (FadA).

The catalysed reaction is a (3S)-3-hydroxyacyl-CoA + NAD(+) = a 3-oxoacyl-CoA + NADH + H(+). It catalyses the reaction a (3S)-3-hydroxyacyl-CoA = a (2E)-enoyl-CoA + H2O. It carries out the reaction a 4-saturated-(3S)-3-hydroxyacyl-CoA = a (3E)-enoyl-CoA + H2O. The enzyme catalyses (3S)-3-hydroxybutanoyl-CoA = (3R)-3-hydroxybutanoyl-CoA. The catalysed reaction is a (3Z)-enoyl-CoA = a 4-saturated (2E)-enoyl-CoA. It catalyses the reaction a (3E)-enoyl-CoA = a 4-saturated (2E)-enoyl-CoA. It functions in the pathway lipid metabolism; fatty acid beta-oxidation. Involved in the aerobic and anaerobic degradation of long-chain fatty acids via beta-oxidation cycle. Catalyzes the formation of 3-oxoacyl-CoA from enoyl-CoA via L-3-hydroxyacyl-CoA. It can also use D-3-hydroxyacyl-CoA and cis-3-enoyl-CoA as substrate. The chain is Fatty acid oxidation complex subunit alpha from Aliivibrio salmonicida (strain LFI1238) (Vibrio salmonicida (strain LFI1238)).